Reading from the N-terminus, the 931-residue chain is Short transient receptor potential channel 6 (931 aa).

A compositionally biased stretch (low complexity) spans 1–23; that stretch reads MSQSPAFGPRRGSSPRGAAGAAA. The interval 1 to 26 is disordered; the sequence is MSQSPAFGPRRGSSPRGAAGAAARRN. The Cytoplasmic segment spans residues 1 to 438; it reads MSQSPAFGPR…CSKMGKIMRG (438 aa). ANK repeat units lie at residues 97–126, 132–161, 163–189, and 218–247; these read IEEE…SLNV, MGQN…LSRV, DALL…FAEG, and HDVT…RIER. A helical transmembrane segment spans residues 439-459; sequence PFMKFVAHAASFTIFLGLLVM. Residues 460–487 lie on the Extracellular side of the membrane; the sequence is NAADRFEGTKLLPNETSTDNAKQLFRMK. The N-linked (GlcNAc...) asparagine glycan is linked to N473. A helical transmembrane segment spans residues 488–508; it reads TSCFSWMEMLIISWVIGMIWA. Over 509-521 the chain is Cytoplasmic; sequence ECKEIWTQGPKEY. A helical transmembrane segment spans residues 522–542; it reads LFELWNMLDFGMLAIFAASFI. Residues 543–592 are Extracellular-facing; sequence ARFMAFWHASKAQSIIDANDTLKDLTKVTLGDNVKYYNLARIKWDPSDPQ. N561 carries N-linked (GlcNAc...) asparagine glycosylation. The helical transmembrane segment at 593 to 613 threads the bilayer; it reads IISEGLYAIAVVLSFSRIAYI. The Cytoplasmic portion of the chain corresponds to 614-636; the sequence is LPANESFGPLQISLGRTVKDIFK. The helical transmembrane segment at 637-657 threads the bilayer; sequence FMVIFIMVFVAFMIGMFNLYS. Residues 658 to 706 are Extracellular-facing; sequence YYIGAKQNEAFTTVEESFKTLFWAIFGLSEVKSVVINYNHKFIENIGYV. A helical transmembrane segment spans residues 707–727; the sequence is LYGVYNVTMVIVLLNMLIAMI. Over 728 to 931 the chain is Cytoplasmic; the sequence is NSSFQEIEDD…MEPNQEETNR (204 aa). At S815 the chain carries Phosphoserine.

This sequence belongs to the transient receptor (TC 1.A.4) family. STrpC subfamily. TRPC6 sub-subfamily. As to quaternary structure, homodimer; forms channel complex. Interacts with MX1 and RNF24. In terms of processing, phosphorylated by FYN, leading to an increase of TRPC6 channel activity. Expressed primarily in placenta, lung, spleen, ovary and small intestine. Expressed in podocytes and is a component of the glomerular slit diaphragm.

The protein resides in the cell membrane. It carries out the reaction Ca(2+)(in) = Ca(2+)(out). Activated by diacylglycerol (DAG) in a membrane-delimited fashion, independently of protein kinase C. Functionally, forms a receptor-activated non-selective calcium permeant cation channel. Probably is operated by a phosphatidylinositol second messenger system activated by receptor tyrosine kinases or G-protein coupled receptors. Activated by diacylglycerol (DAG) in a membrane-delimited fashion, independently of protein kinase C. Seems not to be activated by intracellular calcium store depletion. This is Short transient receptor potential channel 6 from Homo sapiens (Human).